The chain runs to 88 residues: UPF0335 protein Mnod_5968 (88 aa).

This sequence belongs to the UPF0335 family.

In Methylobacterium nodulans (strain LMG 21967 / CNCM I-2342 / ORS 2060), this protein is UPF0335 protein Mnod_5968.